A 305-amino-acid polypeptide reads, in one-letter code: Peroxisome biogenesis factor 2 (305 aa).

Over methionine 1–leucine 15 the chain is Peroxisomal matrix. The helical transmembrane segment at arginine 16 to histidine 42 threads the bilayer. Residues glycine 43–leucine 48 lie on the Cytoplasmic side of the membrane. Residues leucine 49–alanine 74 traverse the membrane as a helical segment. At threonine 75–proline 98 the chain is on the peroxisomal matrix side. The helical transmembrane segment at serine 99–arginine 125 threads the bilayer. At asparagine 126–glycine 133 the chain is on the cytoplasmic side. The chain crosses the membrane as a helical span at residues lysine 134–lysine 160. The Peroxisomal matrix portion of the chain corresponds to glycine 161–glycine 187. The helical transmembrane segment at phenylalanine 188–isoleucine 211 threads the bilayer. The Cytoplasmic segment spans residues asparagine 212–leucine 305. Residues cysteine 244, cysteine 247, cysteine 259, histidine 261, cysteine 264, cysteine 267, cysteine 280, and cysteine 283 each coordinate Zn(2+). An RING-type zinc finger spans residues cysteine 244 to glycine 284.

This sequence belongs to the pex2/pex10/pex12 family. In terms of assembly, component of the PEX2-PEX10-PEX12 retrotranslocation channel, composed of PEX2, PEX10 and PEX12. Post-translationally, forms intramolecular and intermolecular disulfide bonds in response to reactive oxygen species (ROS), promoting higher stability.

It is found in the peroxisome membrane. It carries out the reaction [E2 ubiquitin-conjugating enzyme]-S-ubiquitinyl-L-cysteine + [acceptor protein]-L-cysteine = [E2 ubiquitin-conjugating enzyme]-L-cysteine + [acceptor protein]-S-ubiquitinyl-L-cysteine.. The catalysed reaction is S-ubiquitinyl-[E2 ubiquitin-conjugating enzyme]-L-cysteine + [acceptor protein]-L-lysine = [E2 ubiquitin-conjugating enzyme]-L-cysteine + N(6)-ubiquitinyl-[acceptor protein]-L-lysine.. Its pathway is protein modification; protein ubiquitination. In terms of biological role, E3 ubiquitin-protein ligase component of a retrotranslocation channel required for peroxisome organization by mediating export of the PEX5 receptor from peroxisomes to the cytosol, thereby promoting PEX5 recycling. The retrotranslocation channel is composed of PEX2, PEX10 and PEX12; each subunit contributing transmembrane segments that coassemble into an open channel that specifically allows the passage of PEX5 through the peroxisomal membrane. PEX2 also regulates peroxisome organization by acting as a E3 ubiquitin-protein ligase. PEX2 ubiquitinates PEX5 during its passage through the retrotranslocation channel: catalyzes monoubiquitination of PEX5 at 'Cys-11', a modification that acts as a signal for PEX5 extraction into the cytosol. Required for pexophagy in response to starvation by mediating ubiquitination of peroxisomal proteins, such as PEX5 and ABCD3/PMP70. Also involved in the response to reactive oxygen species (ROS) by mediating 'Lys-48'-linked polyubiquitination and subsequent degradation of PNPLA2/ATGL, thereby regulating lipolysis. This chain is Peroxisome biogenesis factor 2 (Pex2), found in Rattus norvegicus (Rat).